The chain runs to 189 residues: Chitin synthase 2 (189 aa).

Belongs to the chitin synthase family. Class II subfamily.

It localises to the cell membrane. The enzyme catalyses [(1-&gt;4)-N-acetyl-beta-D-glucosaminyl](n) + UDP-N-acetyl-alpha-D-glucosamine = [(1-&gt;4)-N-acetyl-beta-D-glucosaminyl](n+1) + UDP + H(+). In terms of biological role, polymerizes chitin, a structural polymer of the cell wall and septum, by transferring the sugar moiety of UDP-GlcNAc to the non-reducing end of the growing chitin polymer. This is Chitin synthase 2 (CHS2) from Exophiala exophialae (Black yeast-like fungus).